The primary structure comprises 238 residues: RAD9, HUS1, RAD1-interacting nuclear orphan protein 1 (238 aa).

Basic residues predominate over residues 1-10 (MPPRKKRRQP). A disordered region spans residues 1 to 31 (MPPRKKRRQPSQKAPLLFHQQPLEGPKHSCA). Residue S51 is modified to Phosphoserine; by PLK1. The short motif at 55–61 (SWVSPDF) is the RAD1-binding motif element. A disordered region spans residues 74–105 (KHQNRARHSSRKPTTSKFPHLTFESPQSSSSE). Positions 75–84 (HQNRARHSSR) are enriched in basic residues. The D-box signature appears at 125-132 (RRPLVPVL). The KEN box signature appears at 174 to 178 (QKENS).

In terms of assembly, interacts (when phosphorylated by PLK1) with POLQ; promoting POLQ recruitment to DNA damage sites. Interacts with RAD1; interaction is direct and promotes association with the 9-1-1 (RAD9-RAD1-HUS1) complex. Interacts with RAD18. Interacts with TOPBP1. Interacts with UBE2N. Phosphorylated at Ser-51 by PLK1, promoting interaction with polymerase theta (POLQ). Post-translationally, ubiquitinated and degraded by the APC/C complex upon mitotic exit. Weakly expressed in testis, prostate, ovary, thymus and small intestine. Expressed strongly in breast cancer cells.

The protein localises to the nucleus. The protein resides in the chromosome. In terms of biological role, involved in microhomology-mediated end-joining (MMEJ) DNA repair by promoting recruitment of polymerase theta (POLQ) to DNA damage sites during mitosis. MMEJ is an alternative non-homologous end-joining (NHEJ) machinery that takes place during mitosis to repair double-strand breaks in DNA that originate in S-phase. Accumulates in M-phase; following phosphorylation by PLK1, interacts with POLQ, enabling its recruitment to double-strand breaks for subsequent repair. Also involved in the DNA damage response (DDR) signaling in response to genotoxic stresses such as ionizing radiation (IR) during the S phase. Recruited to sites of DNA damage through interaction with the 9-1-1 cell-cycle checkpoint response complex and TOPBP1 in a ATR-dependent manner. Required for the progression of the G1 to S phase transition. Plays a role in the stimulation of CHEK1 phosphorylation. The chain is RAD9, HUS1, RAD1-interacting nuclear orphan protein 1 from Homo sapiens (Human).